We begin with the raw amino-acid sequence, 165 residues long: MTITGKLKSVLLTYSFIISINLLTTMSEASAPSGNPPPPPPPPPPPIEGLNKFKSLNSPPNHQLDNSAKVEQAQHTNKNYTTSNIKTQLSQSLEVPTPTGEFGKKYSKLINPKTSKQNLKIEFPNKIISLVRDELTTKYFAADIEKILTLFSKKNDVILSEAKEK.

Residues 28–97 are disordered; that stretch reads EASAPSGNPP…QLSQSLEVPT (70 aa). Residues 34–47 are compositionally biased toward pro residues; sequence GNPPPPPPPPPPPI. Composition is skewed to polar residues over residues 54–66 and 73–94; these read KSLN…QLDN and AQHT…QSLE.

This is an uncharacterized protein from Rickettsia prowazekii (strain Madrid E).